Reading from the N-terminus, the 681-residue chain is DNA ligase (681 aa).

Residues 42 to 46 (DAEYD), 91 to 92 (SL), and glutamate 120 contribute to the NAD(+) site. The N6-AMP-lysine intermediate role is filled by lysine 122. Positions 143, 180, 302, and 326 each coordinate NAD(+). Zn(2+) contacts are provided by cysteine 420, cysteine 423, cysteine 438, and cysteine 444. The 79-residue stretch at 603-681 (ADAQPLLGQT…EAGLIELIGL (79 aa)) folds into the BRCT domain.

The protein belongs to the NAD-dependent DNA ligase family. LigA subfamily. Mg(2+) serves as cofactor. The cofactor is Mn(2+).

The enzyme catalyses NAD(+) + (deoxyribonucleotide)n-3'-hydroxyl + 5'-phospho-(deoxyribonucleotide)m = (deoxyribonucleotide)n+m + AMP + beta-nicotinamide D-nucleotide.. Functionally, DNA ligase that catalyzes the formation of phosphodiester linkages between 5'-phosphoryl and 3'-hydroxyl groups in double-stranded DNA using NAD as a coenzyme and as the energy source for the reaction. It is essential for DNA replication and repair of damaged DNA. This is DNA ligase from Shewanella amazonensis (strain ATCC BAA-1098 / SB2B).